Here is a 596-residue protein sequence, read N- to C-terminus: Probable tripeptidyl-peptidase SED2 (596 aa).

A signal peptide spans 1-16; the sequence is MRLLKFVCLLASVAAA. Positions 17-203 are cleaved as a propeptide — removed in mature form; it reads KPTPGASHKV…LESMSVEEFA (187 aa). The region spanning 210–596 is the Peptidase S53 domain; it reads LVTTACLREL…NFQALTKVLP (387 aa). The N-linked (GlcNAc...) asparagine glycan is linked to Asn265. Catalysis depends on charge relay system residues Glu286 and Asp290. N-linked (GlcNAc...) asparagine glycosylation occurs at Asn403. Ser501 (charge relay system) is an active-site residue. Ca(2+)-binding residues include Asp543 and Ile544. Asn572 is a glycosylation site (N-linked (GlcNAc...) asparagine). Ca(2+) contacts are provided by Gly576 and Asp578.

Requires Ca(2+) as cofactor.

It localises to the secreted. Its subcellular location is the extracellular space. The catalysed reaction is Release of an N-terminal tripeptide from a polypeptide.. Its function is as follows. Secreted tripeptidyl-peptidase which degrades proteins at acidic pHs and is involved in virulence. This chain is Probable tripeptidyl-peptidase SED2 (SED2), found in Arthroderma benhamiae (strain ATCC MYA-4681 / CBS 112371) (Trichophyton mentagrophytes).